We begin with the raw amino-acid sequence, 267 residues long: NH(3)-dependent NAD(+) synthetase (267 aa).

Residue 38 to 45 coordinates ATP; it reads GISGGVDS. Residue D44 coordinates Mg(2+). Residue R123 participates in deamido-NAD(+) binding. Position 143 (T143) interacts with ATP. E148 contributes to the Mg(2+) binding site. Deamido-NAD(+) is bound by residues K156 and D163. ATP is bound by residues K172 and S193. 250-251 contacts deamido-NAD(+); that stretch reads HK.

Belongs to the NAD synthetase family. In terms of assembly, homodimer.

It carries out the reaction deamido-NAD(+) + NH4(+) + ATP = AMP + diphosphate + NAD(+) + H(+). It participates in cofactor biosynthesis; NAD(+) biosynthesis; NAD(+) from deamido-NAD(+) (ammonia route): step 1/1. Its function is as follows. Catalyzes the ATP-dependent amidation of deamido-NAD to form NAD. Uses ammonia as a nitrogen source. The sequence is that of NH(3)-dependent NAD(+) synthetase from Pyrobaculum aerophilum (strain ATCC 51768 / DSM 7523 / JCM 9630 / CIP 104966 / NBRC 100827 / IM2).